A 148-amino-acid polypeptide reads, in one-letter code: Probable histone H2B.2 (148 aa).

Positions 1–32 are enriched in basic and acidic residues; it reads MAPKGEKKPAEKKPAEEKKSTVAEKAPAEKKP. Residues 1 to 57 are disordered; sequence MAPKGEKKPAEKKPAEEKKSTVAEKAPAEKKPKAGKKLPKEGGSAAGEKKKKRSKKS. Residues lysine 7, lysine 36, and lysine 37 each carry the N6-acetyllysine modification. A Glycyl lysine isopeptide (Lys-Gly) (interchain with G-Cter in ubiquitin) cross-link involves residue lysine 144.

This sequence belongs to the histone H2B family. The nucleosome is a histone octamer containing two molecules each of H2A, H2B, H3 and H4 assembled in one H3-H4 heterotetramer and two H2A-H2B heterodimers. The octamer wraps approximately 147 bp of DNA. In terms of processing, can be acetylated to form H2BK6ac, H2BK33ac and H2BK34ac. Post-translationally, monoubiquitinated to form H2BK143ub1; may give a specific tag for epigenetic transcriptional activation.

The protein localises to the nucleus. The protein resides in the chromosome. Core component of nucleosome. Nucleosomes wrap and compact DNA into chromatin, limiting DNA accessibility to the cellular machineries which require DNA as a template. Histones thereby play a central role in transcription regulation, DNA repair, DNA replication and chromosomal stability. DNA accessibility is regulated via a complex set of post-translational modifications of histones, also called histone code, and nucleosome remodeling. This chain is Probable histone H2B.2, found in Medicago truncatula (Barrel medic).